Reading from the N-terminus, the 213-residue chain is Ras-related protein Rab-25 (213 aa).

Serine 21, glycine 24, lysine 25, threonine 26, asparagine 27, serine 38, histidine 39, threonine 43, and threonine 44 together coordinate GTP. Threonine 26 contacts Mg(2+). Short sequence motifs (switch) lie at residues 35–49 and 67–84; these read NEFSHDSRTTIGVEF and DTAGLERYRAITSAYYRG. Positions 44 and 67 each coordinate Mg(2+). Glycine 70, asparagine 125, lysine 126, aspartate 128, alanine 156, and leucine 157 together coordinate GTP. 2 S-geranylgeranyl cysteine lipidation sites follow: cysteine 209 and cysteine 210. Cysteine 210 carries the post-translational modification Cysteine methyl ester. The propeptide at 211–213 is removed in mature form; it reads ISL.

Belongs to the small GTPase superfamily. Rab family. In terms of assembly, interacts (GTP-bound form) with RAB11FIP1, RAB11FIP2, RAB11FIP3 and RAB11FIP4. Interacts (via the hypervariable C-terminal region) with ITGB1 (via the cytoplasmic region); the interaction is GTP-dependent. Interacts with ITGAV. Associates with the integrin alpha-V/beta-1 heterodimer. Interacts with VPS33B. Mg(2+) serves as cofactor.

Its subcellular location is the cell membrane. The protein localises to the cell projection. It is found in the pseudopodium membrane. It localises to the cytoplasmic vesicle. The enzyme catalyses GTP + H2O = GDP + phosphate + H(+). Its activity is regulated as follows. Regulated by guanine nucleotide exchange factors (GEFs) which promote the exchange of bound GDP for free GTP. Regulated by GTPase activating proteins (GAPs) which increase the GTP hydrolysis activity. Inhibited by GDP dissociation inhibitors (GDIs) which prevent Rab-GDP dissociation. Its function is as follows. The small GTPases Rab are key regulators of intracellular membrane trafficking, from the formation of transport vesicles to their fusion with membranes. Rabs cycle between an inactive GDP-bound form and an active GTP-bound form that is able to recruit to membranes different set of downstream effectors directly responsible for vesicle formation, movement, tethering and fusion. RAB25 regulates epithelial cell differentiation, proliferation and survival, thereby playing key roles in tumorigenesis. Promotes invasive migration of cells in which it functions to localize and maintain integrin alpha-V/beta-1 at the tips of extending pseudopodia. Involved in the regulation of epithelial morphogenesis through the control of CLDN4 expression and localization at tight junctions. May selectively regulate the apical recycling pathway. Together with MYO5B regulates transcytosis. This is Ras-related protein Rab-25 from Mus musculus (Mouse).